Reading from the N-terminus, the 427-residue chain is TNF receptor-associated factor family protein DDB_G0285149 (427 aa).

The RING-type zinc-finger motif lies at 20–65 (CIVCTDLLSESHDKIQVNQCPHGHCLCSDCWTKQIENKKKECPICR). 2 consecutive TRAF-type zinc fingers follow at residues 122-178 (THFK…INKD) and 178-234 (DHLE…KHQA). One can recognise an MATH domain in the interval 284-415 (KYSNQWVIEN…GNKLTIKFEI (132 aa)).

The protein belongs to the TNF receptor-associated factor family. A subfamily.

Its subcellular location is the cytoplasm. Probable adapter protein and signal transducer that links members of the tumor necrosis factor receptor family to different signaling pathways by association with the receptor cytoplasmic domain and kinases. This is TNF receptor-associated factor family protein DDB_G0285149 from Dictyostelium discoideum (Social amoeba).